We begin with the raw amino-acid sequence, 264 residues long: S-adenosylmethionine decarboxylase proenzyme (264 aa).

Serine 113 (schiff-base intermediate with substrate; via pyruvic acid) is an active-site residue. A Pyruvic acid (Ser); by autocatalysis modification is found at serine 113. Residue histidine 118 is the Proton acceptor; for processing activity of the active site. The Proton donor; for catalytic activity role is filled by cysteine 141.

Belongs to the prokaryotic AdoMetDC family. Type 2 subfamily. Heterooctamer of four alpha and four beta chains arranged as a tetramer of alpha/beta heterodimers. The cofactor is pyruvate. In terms of processing, is synthesized initially as an inactive proenzyme. Formation of the active enzyme involves a self-maturation process in which the active site pyruvoyl group is generated from an internal serine residue via an autocatalytic post-translational modification. Two non-identical subunits are generated from the proenzyme in this reaction, and the pyruvate is formed at the N-terminus of the alpha chain, which is derived from the carboxyl end of the proenzyme. The post-translation cleavage follows an unusual pathway, termed non-hydrolytic serinolysis, in which the side chain hydroxyl group of the serine supplies its oxygen atom to form the C-terminus of the beta chain, while the remainder of the serine residue undergoes an oxidative deamination to produce ammonia and the pyruvoyl group blocking the N-terminus of the alpha chain.

It catalyses the reaction S-adenosyl-L-methionine + H(+) = S-adenosyl 3-(methylsulfanyl)propylamine + CO2. The protein operates within amine and polyamine biosynthesis; S-adenosylmethioninamine biosynthesis; S-adenosylmethioninamine from S-adenosyl-L-methionine: step 1/1. Functionally, catalyzes the decarboxylation of S-adenosylmethionine to S-adenosylmethioninamine (dcAdoMet), the propylamine donor required for the synthesis of the polyamines spermine and spermidine from the diamine putrescine. This Xanthomonas oryzae pv. oryzae (strain MAFF 311018) protein is S-adenosylmethionine decarboxylase proenzyme.